Reading from the N-terminus, the 291-residue chain is Fructose-1,6-bisphosphatase class 1 1 (291 aa).

Residues Glu78, Asp95, Leu97, and Asp98 each contribute to the Mg(2+) site. Residues Asp98 to Ser101, Tyr203, and Lys233 each bind substrate. Glu239 contacts Mg(2+).

It belongs to the FBPase class 1 family. As to quaternary structure, homotetramer. Requires Mg(2+) as cofactor.

Its subcellular location is the cytoplasm. It catalyses the reaction beta-D-fructose 1,6-bisphosphate + H2O = beta-D-fructose 6-phosphate + phosphate. It functions in the pathway carbohydrate biosynthesis; gluconeogenesis. This Haloarcula marismortui (strain ATCC 43049 / DSM 3752 / JCM 8966 / VKM B-1809) (Halobacterium marismortui) protein is Fructose-1,6-bisphosphatase class 1 1.